Consider the following 464-residue polypeptide: UDP-N-acetylmuramate--L-alanine ligase (464 aa).

112 to 118 (GTHGKTT) provides a ligand contact to ATP.

The protein belongs to the MurCDEF family.

It localises to the cytoplasm. The catalysed reaction is UDP-N-acetyl-alpha-D-muramate + L-alanine + ATP = UDP-N-acetyl-alpha-D-muramoyl-L-alanine + ADP + phosphate + H(+). It participates in cell wall biogenesis; peptidoglycan biosynthesis. In terms of biological role, cell wall formation. The polypeptide is UDP-N-acetylmuramate--L-alanine ligase (Chromobacterium violaceum (strain ATCC 12472 / DSM 30191 / JCM 1249 / CCUG 213 / NBRC 12614 / NCIMB 9131 / NCTC 9757 / MK)).